Reading from the N-terminus, the 520-residue chain is GMP synthase [glutamine-hydrolyzing] (520 aa).

The 194-residue stretch at 9-202 folds into the Glutamine amidotransferase type-1 domain; the sequence is TVLIVDFGSQ…IHNIAGIKGD (194 aa). C86 serves as the catalytic Nucleophile. Residues H176 and E178 contribute to the active site. The 193-residue stretch at 203 to 395 folds into the GMPS ATP-PPase domain; it reads WSMSAYRAKA…LGLPDSFIGR (193 aa). 230 to 236 contributes to the ATP binding site; it reads SGGVDSS.

In terms of assembly, homodimer.

The enzyme catalyses XMP + L-glutamine + ATP + H2O = GMP + L-glutamate + AMP + diphosphate + 2 H(+). Its pathway is purine metabolism; GMP biosynthesis; GMP from XMP (L-Gln route): step 1/1. In terms of biological role, catalyzes the synthesis of GMP from XMP. The protein is GMP synthase [glutamine-hydrolyzing] of Rhizobium rhizogenes (strain K84 / ATCC BAA-868) (Agrobacterium radiobacter).